The chain runs to 224 residues: UPF0758 protein PSPA7_6095 (224 aa).

The 123-residue stretch at 102–224 folds into the MPN domain; sequence VLESPQAVRD…PLSLAEYGWM (123 aa). Zn(2+)-binding residues include histidine 173, histidine 175, and aspartate 186. Residues 173–186 carry the JAMM motif motif; the sequence is HNHPSGDARPSLAD.

Belongs to the UPF0758 family.

The sequence is that of UPF0758 protein PSPA7_6095 from Pseudomonas paraeruginosa (strain DSM 24068 / PA7) (Pseudomonas aeruginosa (strain PA7)).